Consider the following 490-residue polypeptide: UDP-glucosyl transferase 73M2 (490 aa).

H20 functions as the Proton acceptor in the catalytic mechanism. The active-site Charge relay is D124. 8 residues coordinate UDP: S297, W353, A354, H371, N375, S376, E379, and Y393.

It belongs to the UDP-glycosyltransferase family. As to expression, mainly expressed in flowers, flower buds and young leaves, and, to a lesser extent, in old leaves, stems and roots.

It participates in secondary metabolite biosynthesis; terpenoid biosynthesis. Its function is as follows. Component of the oleanane-type triterpene saponins (e.g. saponarioside A and saponarioside B) biosynthetic pathway, leading to the production of natural products with detergent properties used as traditional sources of soap. A glycosyltransferase that mediates the conversion of QA-triFRX to QA-triFRXX via the elongation of the C-28 sugar chain with a D-xylose. The chain is UDP-glucosyl transferase 73M2 from Saponaria officinalis (Common soapwort).